The primary structure comprises 460 residues: Interleukin-6 receptor subunit alpha (460 aa).

Residues 1 to 19 form the signal peptide; the sequence is MLTVGCTLLVALLAAPAVA. Residues 20–116 form the Ig-like C2-type domain; that stretch reads LVLGSCRALE…DVPPEEPKLS (97 aa). The Extracellular portion of the chain corresponds to 20–364; it reads LVLGSCRALE…VQESSSMSLP (345 aa). 4 disulfides stabilise this stretch: Cys-25-Cys-190, Cys-47-Cys-92, Cys-117-Cys-128, and Cys-162-Cys-173. 2 N-linked (GlcNAc...) asparagine glycosylation sites follow: Asn-32 and Asn-55. Fibronectin type-III domains follow at residues 109-214 and 215-313; these read PPEE…VQPD and PPAN…TPWI. Asn-150 carries N-linked (GlcNAc...) asparagine glycosylation. The N-linked (GlcNAc...) asparagine glycan is linked to Asn-218. The WSXWS motif motif lies at 300 to 304; that stretch reads WSEWS. Residues 365–385 traverse the membrane as a helical segment; sequence TFLVAGGSLAFGLLLCVFIIL. Topologically, residues 386 to 460 are cytoplasmic; it reads RLKQKWKSEA…NSNRDYLFPR (75 aa).

The protein belongs to the type I cytokine receptor family. Type 3 subfamily. As to quaternary structure, component of a hexamer of two molecules each of IL6, IL6R and IL6ST; first binds to IL6 to associate with the signaling subunit IL6ST. Interacts (via N-terminal ectodomain) with SORL1; this interaction may affect IL6-binding to IL6R, hence decrease IL6 'classic-signaling'. Also interacts with SORL1; this interaction leads to soluble IL6R internalization. May form a trimeric complex with the soluble SORL1 ectodomain and circulating IL6 receptor; this interaction might stabilize circulating IL6, hence promote IL6 'trans-signaling'. Post-translationally, a short soluble form is also released from the membrane by proteolysis. The sIL6R is formed by limited proteolysis of membrane-bound receptors, a process referred to as ectodomain shedding. mIL6R is cleaved by the proteases ADAM10 and ADAM17. In terms of processing, glycosylated. Glycosylation is dispensable for transport, signaling, and cell-surface turnover. Glycosylation at Asn-55 is a protease-regulatory exosite. Glycosylation is required for ADAM17-mediated proteolysis. As to expression, expressed by dendritic cells. Detected in the cerebrospinal fluid.

It localises to the cell membrane. Its subcellular location is the secreted. With respect to regulation, classic and trans-signaling are both inhibited by tocilizumab, a humanized monoclonal antibody that blocks interleukin IL6R signaling. Functionally, part of the receptor for interleukin 6. Binds to IL6 with low affinity, but does not transduce a signal. Signal activation necessitate an association with IL6ST. Activation leads to the regulation of the immune response, acute-phase reactions and hematopoiesis. The interaction with membrane-bound IL6R and IL6ST stimulates 'classic signaling', the restricted expression of the IL6R limits classic IL6 signaling to only a few tissues such as the liver and some cells of the immune system. Whereas the binding of IL6 and soluble IL6R to IL6ST stimulates 'trans-signaling'. Alternatively, 'cluster signaling' occurs when membrane-bound IL6:IL6R complexes on transmitter cells activate IL6ST receptors on neighboring receiver cells. Its function is as follows. Signaling via the membrane-bound IL6R is mostly regenerative and anti-inflammatory. Drives naive CD4(+) T cells to the Th17 lineage, through 'cluster signaling' by dendritic cells. In terms of biological role, soluble form of IL6 receptor (sIL6R) that acts as an agonist of IL6 activity. The IL6:sIL6R complex (hyper-IL6) binds to IL6ST/gp130 on cell surfaces and induces signaling also on cells that do not express membrane-bound IL6R in a process called IL6 'trans-signaling'. sIL6R is causative for the pro-inflammatory properties of IL6 and an important player in the development of chronic inflammatory diseases. In complex with IL6, is required for induction of VEGF production. Plays a protective role during liver injury, being required for maintenance of tissue regeneration. 'Trans-signaling' in central nervous system regulates energy and glucose homeostasis. The protein is Interleukin-6 receptor subunit alpha of Mus musculus (Mouse).